Consider the following 196-residue polypeptide: MSEALSASALATLFIDARTHSAWRETPVSDAQLRDLYEMVRLGPTSANCSPGRLLFVTTPQAKARLKPALSSGNVEKTMQAPVTAIVAWDSEFYEALPTLFPYADARAWFTSSPAVAEETAFRNSSLQAGYLIMACRALGLDTGPMSGFDRAAVDAEFFSGTPWKSNLLINIGYGDSEKLHPRLPRLAFEDACAIV.

This sequence belongs to the nitroreductase family. HadB/RutE subfamily. FMN is required as a cofactor.

The catalysed reaction is 3-hydroxypropanoate + NADP(+) = 3-oxopropanoate + NADPH + H(+). May reduce toxic product malonic semialdehyde to 3-hydroxypropionic acid, which is excreted. The sequence is that of Probable malonic semialdehyde reductase RutE from Cronobacter sakazakii (strain ATCC BAA-894) (Enterobacter sakazakii).